Consider the following 475-residue polypeptide: Ribulose bisphosphate carboxylase large chain (475 aa).

Positions 1–2 (MS) are excised as a propeptide. Pro3 bears the N-acetylproline mark. Position 14 is an N6,N6,N6-trimethyllysine (Lys14). Substrate is bound by residues Asn123 and Thr173. Residue Lys175 is the Proton acceptor of the active site. Substrate is bound at residue Lys177. Residues Lys201, Asp203, and Glu204 each coordinate Mg(2+). Residue Lys201 is modified to N6-carboxylysine. Residue His294 is the Proton acceptor of the active site. Residues Arg295, His327, and Ser379 each contribute to the substrate site.

Belongs to the RuBisCO large chain family. Type I subfamily. Heterohexadecamer of 8 large chains and 8 small chains. Requires Mg(2+) as cofactor.

It localises to the plastid. The enzyme catalyses 2 (2R)-3-phosphoglycerate + 2 H(+) = D-ribulose 1,5-bisphosphate + CO2 + H2O. It carries out the reaction D-ribulose 1,5-bisphosphate + O2 = 2-phosphoglycolate + (2R)-3-phosphoglycerate + 2 H(+). In terms of biological role, ruBisCO catalyzes two reactions: the carboxylation of D-ribulose 1,5-bisphosphate, the primary event in carbon dioxide fixation, as well as the oxidative fragmentation of the pentose substrate in the photorespiration process. Both reactions occur simultaneously and in competition at the same active site. In Aneura mirabilis (Parasitic liverwort), this protein is Ribulose bisphosphate carboxylase large chain.